A 1192-amino-acid polypeptide reads, in one-letter code: Probable ATP-dependent RNA helicase kurz (1192 aa).

The segment at 170–214 (ELQAKRKNPNVISVEEDDEDSSSSDEDDEEAPAQSAPIAIPTPVS) is disordered. A compositionally biased stretch (acidic residues) spans 183 to 200 (VEEDDEDSSSSDEDDEEA). The Helicase ATP-binding domain occupies 270 to 436 (METINENPIV…TRLFKIPPPL (167 aa)). 283–290 (GETGSGKT) lines the ATP pocket. The DEAH box motif lies at 379 to 382 (DEAH). The interval 504 to 529 (APTKDVAKNGKVSEEEKEETIDDAAS) is disordered. A compositionally biased stretch (basic and acidic residues) spans 505-517 (PTKDVAKNGKVSE). Ser-529 is modified (phosphoserine). The residue at position 530 (Thr-530) is a Phosphothreonine. A Helicase C-terminal domain is found at 540–746 (DMKRVIRNIR…DLMLQMRCMG (207 aa)). Positions 567 to 583 (DDYKLPGDDTEADMHEQ) are enriched in basic and acidic residues. The interval 567 to 612 (DDYKLPGDDTEADMHEQPDEDDEQEGLEEDNDDELGLEDESGMGSG) is disordered. Residues 584–607 (PDEDDEQEGLEEDNDDELGLEDES) show a composition bias toward acidic residues.

The protein belongs to the DEAD box helicase family. DEAH subfamily.

The catalysed reaction is ATP + H2O = ADP + phosphate + H(+). This Drosophila melanogaster (Fruit fly) protein is Probable ATP-dependent RNA helicase kurz (kz).